The sequence spans 379 residues: Carbamoyl phosphate synthase small chain (379 aa).

The segment at 1 to 189 is CPSase; the sequence is MSKSALLVLE…GLPEAKADSE (189 aa). 3 residues coordinate L-glutamine: Ser47, Gly241, and Gly243. The Glutamine amidotransferase type-1 domain occupies 193–379; that stretch reads HVVAYDFGAK…FIELIKQFRA (187 aa). Cys269 acts as the Nucleophile in catalysis. Positions 270, 273, 311, 313, and 314 each coordinate L-glutamine. Residues His353 and Glu355 contribute to the active site.

The protein belongs to the CarA family. Composed of two chains; the small (or glutamine) chain promotes the hydrolysis of glutamine to ammonia, which is used by the large (or ammonia) chain to synthesize carbamoyl phosphate. Tetramer of heterodimers (alpha,beta)4.

The catalysed reaction is hydrogencarbonate + L-glutamine + 2 ATP + H2O = carbamoyl phosphate + L-glutamate + 2 ADP + phosphate + 2 H(+). The enzyme catalyses L-glutamine + H2O = L-glutamate + NH4(+). The protein operates within amino-acid biosynthesis; L-arginine biosynthesis; carbamoyl phosphate from bicarbonate: step 1/1. Its pathway is pyrimidine metabolism; UMP biosynthesis via de novo pathway; (S)-dihydroorotate from bicarbonate: step 1/3. Its function is as follows. Small subunit of the glutamine-dependent carbamoyl phosphate synthetase (CPSase). CPSase catalyzes the formation of carbamoyl phosphate from the ammonia moiety of glutamine, carbonate, and phosphate donated by ATP, constituting the first step of 2 biosynthetic pathways, one leading to arginine and/or urea and the other to pyrimidine nucleotides. The small subunit (glutamine amidotransferase) binds and cleaves glutamine to supply the large subunit with the substrate ammonia. The chain is Carbamoyl phosphate synthase small chain from Vibrio cholerae serotype O1 (strain ATCC 39315 / El Tor Inaba N16961).